The sequence spans 540 residues: Chaperonin GroEL (540 aa).

Residues 29 to 32 (TLGP), 86 to 90 (DGTTT), G413, 476 to 478 (NAA), and D492 each bind ATP.

It belongs to the chaperonin (HSP60) family. In terms of assembly, forms a cylinder of 14 subunits composed of two heptameric rings stacked back-to-back. Interacts with the co-chaperonin GroES.

It localises to the cytoplasm. The catalysed reaction is ATP + H2O + a folded polypeptide = ADP + phosphate + an unfolded polypeptide.. Its function is as follows. Together with its co-chaperonin GroES, plays an essential role in assisting protein folding. The GroEL-GroES system forms a nano-cage that allows encapsulation of the non-native substrate proteins and provides a physical environment optimized to promote and accelerate protein folding. This Streptococcus constellatus protein is Chaperonin GroEL.